The following is a 523-amino-acid chain: Fidgetin-like protein 1 (523 aa).

The interval 114–154 (PVQQAVKSRPEGQFPESRNNSTKKIDAQQYSSESSSQSGFG) is disordered. Residues 141–151 (QQYSSESSSQS) are compositionally biased toward low complexity. Residues Ala253 and 293–298 (GTGKTL) each bind ATP.

This sequence belongs to the AAA ATPase family. As to quaternary structure, hexamer. Mg(2+) serves as cofactor.

It carries out the reaction ATP + H2O = ADP + phosphate + H(+). The protein is Fidgetin-like protein 1 of Drosophila melanogaster (Fruit fly).